Reading from the N-terminus, the 27-residue chain is uncharacterized protein (27 aa).

This is an uncharacterized protein from Archaeoglobus fulgidus (strain ATCC 49558 / DSM 4304 / JCM 9628 / NBRC 100126 / VC-16).